A 590-amino-acid polypeptide reads, in one-letter code: Nuclear receptor subfamily 2 group C member 1 (590 aa).

The segment at 1–166 is required for interaction with KAT2B; it reads MATIEEIAHQ…RLQRCIAFGM (166 aa). Residues 98–173 constitute a DNA-binding region (nuclear receptor); sequence FDLCVVCGDK…FGMKQDSVQC (76 aa). NR C4-type zinc fingers lie at residues 101 to 121 and 137 to 156; these read CVVCGDKASGRHYGAITCEGC and CRGSKDCVINKHHRNRCQYC. Phosphoserine is present on residues serine 185 and serine 203. The residue at position 208 (threonine 208) is a Phosphothreonine. The residue at position 210 (threonine 210) is a Phosphothreonine; by MAPK1. Lysine 238 participates in a covalent cross-link: Glycyl lysine isopeptide (Lys-Gly) (interchain with G-Cter in SUMO); alternate. A Glycyl lysine isopeptide (Lys-Gly) (interchain with G-Cter in SUMO2); alternate cross-link involves residue lysine 238. The region spanning 333–577 is the NR LBD domain; sequence EGMEGSPHLI…SVIPHILKME (245 aa). Residues serine 461 and serine 568 each carry the phosphoserine; by PKC modification. Positions 571-590 are required for interaction with NRIP1; sequence PHILKMEPADYNSQIIGHSL. A Glycyl lysine isopeptide (Lys-Gly) (interchain with G-Cter in SUMO2) cross-link involves residue lysine 575.

The protein belongs to the nuclear hormone receptor family. NR2 subfamily. As to quaternary structure, homodimer. Heterodimer; with NR2C2 which is required for chromatin remodeling and for binding to promoter regions such as globin DR1 repeats. Interacts with ESR1; the interaction prevents homodimerization of ESR1 and suppresses its transcriptional activity and cell growth. Interacts with NRIP1 (via its LXXLL motifs); the interaction provides corepressor activity. Interacts with HDAC3 (via the DNA-binding domain); the interaction recruits phosphorylated NR2C1 to PML bodies for sumoylation. Interacts with HDAC4 (via the DNA-binding domain). Interacts with PIAS1; the interaction is required for sumoylation of NR2C1. Interacts with UBE2I; the interaction is required for sumoylation of NR2C1. Interacts with KAT2B; the interaction acts as a corepressor of gene expression. Post-translationally, sumoylation requires both PIAS1 and UBE2I. Sumoylation appears to dissociate NR2C1 from the PML nuclear bodies. Enhances the interaction with NRIP1 but inhibits interaction with KAT2B. In proliferating cells, stimulation by all-trans retinoic acid, activation of MAPK1-mediated phosphorylation and recruitment to PML bodies with subsequent sumoylation, suppresses OCT4 expression. In terms of processing, phosphorylated on several serine and threonine residues. Phosphorylation on Thr-210, stimulated by all-trans retinoic acid (atRA) mediates PML location and sumoylation in proliferating cells which then modulates its association with effector molecules, KAT2B and NRIP1. Phosphorylation on Ser-568 by PKC is important for protein stability and function as activator of RARB. Isoform 1 is highly expressed in the adlumenal compartment of the seminiferous tubule of adult testes (at protein level) and in the eyes of newborn animals. Weakly expressed in other adult organs including the seminal vesicle, prostate, ovary, adrenal gland, heart, thymus, placenta and brain. Expressed during embryonic stages in developing eyes, brain and cartilage primordia (at protein level). Also expressed in the developing spinal motor neurons and in the sympathetic-, parasympathetic- and sensory ganglia of the embryonic PNS. Expressed in the developing neural epithelia of the inner ear, nasal cavity, tongue and retina. At day 16.5, expressed in various tissues including kidney and intestine. In contrast, isoform 2 is widely expressed at a low level throughout the adult testis.

The protein localises to the nucleus. It localises to the PML body. Functionally, orphan nuclear receptor. Binds the IR7 element in the promoter of its own gene in an autoregulatory negative feedback mechanism. Primarily repressor of a broad range of genes including ESR1 and RARB. Together with NR2C2, forms the core of the DRED (direct repeat erythroid-definitive) complex that represses embryonic and fetal globin transcription. Binds to hormone response elements (HREs) consisting of two 5'-AGGTCA-3' half site direct repeat consensus sequences. Also activator of OCT4 gene expression. Plays a fundamental role in early embryogenesis and regulates embryonic stem cell proliferation and differentiation. Mediator of retinoic acid-regulated preadipocyte proliferation. The sequence is that of Nuclear receptor subfamily 2 group C member 1 from Mus musculus (Mouse).